Reading from the N-terminus, the 55-residue chain is ATP synthase protein 8 (55 aa).

The helical transmembrane segment at 7–24 threads the bilayer; sequence NPWLFIMLMSWLTFSLII. Positions 35-55 are disordered; it reads NPPSNKTPTTTKTSPWTWPWT. Residues 37-55 show a composition bias toward low complexity; the sequence is PSNKTPTTTKTSPWTWPWT.

Belongs to the ATPase protein 8 family. As to quaternary structure, F-type ATPases have 2 components, CF(1) - the catalytic core - and CF(0) - the membrane proton channel.

The protein localises to the mitochondrion membrane. Its function is as follows. Mitochondrial membrane ATP synthase (F(1)F(0) ATP synthase or Complex V) produces ATP from ADP in the presence of a proton gradient across the membrane which is generated by electron transport complexes of the respiratory chain. F-type ATPases consist of two structural domains, F(1) - containing the extramembraneous catalytic core and F(0) - containing the membrane proton channel, linked together by a central stalk and a peripheral stalk. During catalysis, ATP synthesis in the catalytic domain of F(1) is coupled via a rotary mechanism of the central stalk subunits to proton translocation. Part of the complex F(0) domain. Minor subunit located with subunit a in the membrane. This is ATP synthase protein 8 (MT-ATP8) from Corythaeola cristata (Great blue turaco).